The chain runs to 293 residues: Nitrogenase iron protein (293 aa).

Position 10–17 (10–17) interacts with ATP; the sequence is GKGGIGKS. A [4Fe-4S] cluster-binding site is contributed by C98. The residue at position 101 (R101) is an ADP-ribosylarginine; by dinitrogenase reductase ADP-ribosyltransferase. Residue C133 participates in [4Fe-4S] cluster binding.

Belongs to the NifH/BchL/ChlL family. In terms of assembly, homodimer. The cofactor is [4Fe-4S] cluster. In terms of processing, the reversible ADP-ribosylation of Arg-101 inactivates the nitrogenase reductase and regulates nitrogenase activity.

It carries out the reaction N2 + 8 reduced [2Fe-2S]-[ferredoxin] + 16 ATP + 16 H2O = H2 + 8 oxidized [2Fe-2S]-[ferredoxin] + 2 NH4(+) + 16 ADP + 16 phosphate + 6 H(+). In terms of biological role, the key enzymatic reactions in nitrogen fixation are catalyzed by the nitrogenase complex, which has 2 components: the iron protein and the molybdenum-iron protein. The polypeptide is Nitrogenase iron protein (Stutzerimonas stutzeri (strain A1501) (Pseudomonas stutzeri)).